Here is a 270-residue protein sequence, read N- to C-terminus: ATP synthase subunit b 1 (270 aa).

The chain crosses the membrane as a helical span at residues 2–22 (LIDWFTVIAQLINFLVLVWLL).

The protein belongs to the ATPase B chain family. In terms of assembly, F-type ATPases have 2 components, F(1) - the catalytic core - and F(0) - the membrane proton channel. F(1) has five subunits: alpha(3), beta(3), gamma(1), delta(1), epsilon(1). F(0) has three main subunits: a(1), b(2) and c(10-14). The alpha and beta chains form an alternating ring which encloses part of the gamma chain. F(1) is attached to F(0) by a central stalk formed by the gamma and epsilon chains, while a peripheral stalk is formed by the delta and b chains.

The protein localises to the cell inner membrane. Functionally, f(1)F(0) ATP synthase produces ATP from ADP in the presence of a proton or sodium gradient. F-type ATPases consist of two structural domains, F(1) containing the extramembraneous catalytic core and F(0) containing the membrane proton channel, linked together by a central stalk and a peripheral stalk. During catalysis, ATP synthesis in the catalytic domain of F(1) is coupled via a rotary mechanism of the central stalk subunits to proton translocation. Its function is as follows. Component of the F(0) channel, it forms part of the peripheral stalk, linking F(1) to F(0). The sequence is that of ATP synthase subunit b 1 from Marinomonas sp. (strain MWYL1).